Here is a 377-residue protein sequence, read N- to C-terminus: Nitric oxide reductase FlRd-NAD(+) reductase (377 aa).

The protein belongs to the FAD-dependent oxidoreductase family. FAD serves as cofactor.

It localises to the cytoplasm. It catalyses the reaction 2 reduced [nitric oxide reductase rubredoxin domain] + NAD(+) + H(+) = 2 oxidized [nitric oxide reductase rubredoxin domain] + NADH. It functions in the pathway nitrogen metabolism; nitric oxide reduction. In terms of biological role, one of at least two accessory proteins for anaerobic nitric oxide (NO) reductase. Reduces the rubredoxin moiety of NO reductase. The polypeptide is Nitric oxide reductase FlRd-NAD(+) reductase (Shigella flexneri serotype 5b (strain 8401)).